The chain runs to 212 residues: uncharacterized protein (212 aa).

The S-adenosyl-L-methionine site is built by Gly53, Glu74, and Asp97.

It belongs to the methyltransferase superfamily. YrrT family.

In terms of biological role, could be a S-adenosyl-L-methionine-dependent methyltransferase. This is an uncharacterized protein from Bacillus cereus (strain ZK / E33L).